Here is a 161-residue protein sequence, read N- to C-terminus: Troponin C, slow skeletal and cardiac muscles (161 aa).

M1 bears the N-acetylmethionine mark. 4 EF-hand domains span residues 16-51, 52-87, 92-127, and 128-161; these read QKNE…LGQN, PTPE…CMKD, KSEE…TGET, and ITED…KGVE. D65, D67, S69, T71, and E76 together coordinate Ca(2+). Position 98 is a phosphoserine (S98). 10 residues coordinate Ca(2+): D105, N107, D109, Y111, E116, D141, N143, D145, R147, and E152.

Belongs to the troponin C family.

Troponin is the central regulatory protein of striated muscle contraction. Tn consists of three components: Tn-I which is the inhibitor of actomyosin ATPase, Tn-T which contains the binding site for tropomyosin and Tn-C. The binding of calcium to Tn-C abolishes the inhibitory action of Tn on actin filaments. The polypeptide is Troponin C, slow skeletal and cardiac muscles (Tnnc1) (Mus musculus (Mouse)).